The chain runs to 363 residues: Fructose-1,6-bisphosphatase 1 (363 aa).

V2 is subject to N-acetylvaline. Residues 18–22 (VLEEG) and 28–32 (TGEMT) contribute to the AMP site. Mg(2+) is bound by residues D69 and E98. Position 113–114 (113–114 (KY)) interacts with AMP. D119, L121, and D122 together coordinate Mg(2+). 122 to 125 (DGSS) provides a ligand contact to substrate. Residue R141 participates in AMP binding. The residue at position 151 (K151) is an N6-succinyllysine. Residues 213 to 216 (NEGY), 244 to 249 (RYVGSM), Y265, and 275 to 277 (KLR) each bind substrate. Phosphotyrosine is present on residues Y216, Y245, and Y265. Residue E281 participates in Mg(2+) binding. Residues S339 and S353 each carry the phosphoserine modification.

It belongs to the FBPase class 1 family. In terms of assembly, homotetramer. It depends on Mg(2+) as a cofactor.

The enzyme catalyses beta-D-fructose 1,6-bisphosphate + H2O = beta-D-fructose 6-phosphate + phosphate. It functions in the pathway carbohydrate biosynthesis; gluconeogenesis. With respect to regulation, subject to complex allosteric regulation. The enzyme can assume an active R-state, or an inactive T-state. Intermediate conformations may exist. AMP acts as an allosteric inhibitor. AMP binding affects the turnover of bound substrate and not the affinity for substrate. Fructose 2,6-bisphosphate acts as a competitive inhibitor. Fructose 2,6-bisphosphate and AMP have synergistic effects. In terms of biological role, catalyzes the hydrolysis of fructose 1,6-bisphosphate to fructose 6-phosphate in the presence of divalent cations, acting as a rate-limiting enzyme in gluconeogenesis. Plays a role in regulating glucose sensing and insulin secretion of pancreatic beta-cells. Appears to modulate glycerol gluconeogenesis in liver. Important regulator of appetite and adiposity; increased expression of the protein in liver after nutrient excess increases circulating satiety hormones and reduces appetite-stimulating neuropeptides and thus seems to provide a feedback mechanism to limit weight gain. The protein is Fructose-1,6-bisphosphatase 1 (Fbp1) of Rattus norvegicus (Rat).